Consider the following 197-residue polypeptide: Putative manganese efflux pump MntP 1 (197 aa).

Transmembrane regions (helical) follow at residues 8–28 (VILL…GLGA), 43–63 (VYAA…GYLL), 66–86 (VLLG…LILL), 123–143 (LAIA…LLAL), 146–166 (WLAC…GIYL), and 176–196 (DKAE…VMFI).

This sequence belongs to the MntP (TC 9.B.29) family.

It is found in the cell inner membrane. Probably functions as a manganese efflux pump. The protein is Putative manganese efflux pump MntP 1 of Psychrobacter cryohalolentis (strain ATCC BAA-1226 / DSM 17306 / VKM B-2378 / K5).